The following is a 235-amino-acid chain: Uridylate kinase (235 aa).

Residue 10–13 coordinates ATP; the sequence is KLSG. Gly52 is a UMP binding site. Positions 53 and 57 each coordinate ATP. Residues Asp72 and 133–140 contribute to the UMP site; that span reads TSNPYFST. 3 residues coordinate ATP: Thr160, Tyr166, and Asp169.

It belongs to the UMP kinase family. Homohexamer.

The protein localises to the cytoplasm. It catalyses the reaction UMP + ATP = UDP + ADP. Its pathway is pyrimidine metabolism; CTP biosynthesis via de novo pathway; UDP from UMP (UMPK route): step 1/1. Its activity is regulated as follows. Inhibited by UTP. Catalyzes the reversible phosphorylation of UMP to UDP. This Solibacter usitatus (strain Ellin6076) protein is Uridylate kinase.